Here is a 431-residue protein sequence, read N- to C-terminus: MTRPLLSPEWVARLKQFKKLIVGFSGGLDSTVLLHVLASTPPLYNQLLAVHINHGISGNSLNWQRHCEQLCLDLGIAFIAKAIEFDRSANVEEAARNARYDFFSSLLEDNDCLVLGHHLDDQAETVLLQLFRGAGVDGLAAMQECSNLGAGQLARPFLTCPRVELEHYARIHELKWIEDESNQDTKYSRNYLRHRVMPLLLEKWPGVAGNISRAATHCQQAKANLEVLAIKDCPDLLNATDHLLIEPLKGLEFERITNVLKFWLKKNRVQLPSSKTFQRIIHEIIFAKLDAMPTVSWNQIQVRRFQQHLYLLKADQINLPKAIKWQQFPASLTYPDANIELSAVKAQKGLMIPKDAQIEIRFRKGGEEIYWHDQTKHLKKLFQEWQIPPWLRERVPLVYINDQLACVVGYAVSDLFFTTNPLEAWSIVNNS.

25-30 lines the ATP pocket; sequence SGGLDS.

It belongs to the tRNA(Ile)-lysidine synthase family.

It is found in the cytoplasm. It carries out the reaction cytidine(34) in tRNA(Ile2) + L-lysine + ATP = lysidine(34) in tRNA(Ile2) + AMP + diphosphate + H(+). Functionally, ligates lysine onto the cytidine present at position 34 of the AUA codon-specific tRNA(Ile) that contains the anticodon CAU, in an ATP-dependent manner. Cytidine is converted to lysidine, thus changing the amino acid specificity of the tRNA from methionine to isoleucine. The polypeptide is tRNA(Ile)-lysidine synthase (Legionella pneumophila (strain Lens)).